The primary structure comprises 807 residues: Glycerol-3-phosphate acyltransferase (807 aa).

The HXXXXD motif motif lies at 308 to 313 (CHRSHM).

Belongs to the GPAT/DAPAT family.

Its subcellular location is the cell inner membrane. It carries out the reaction sn-glycerol 3-phosphate + an acyl-CoA = a 1-acyl-sn-glycero-3-phosphate + CoA. It participates in phospholipid metabolism; CDP-diacylglycerol biosynthesis; CDP-diacylglycerol from sn-glycerol 3-phosphate: step 1/3. The chain is Glycerol-3-phosphate acyltransferase from Shewanella halifaxensis (strain HAW-EB4).